An 886-amino-acid chain; its full sequence is DNA mismatch repair protein MutS (886 aa).

An ATP-binding site is contributed by 641–648; that stretch reads GPNMAGKS.

It belongs to the DNA mismatch repair MutS family.

In terms of biological role, this protein is involved in the repair of mismatches in DNA. It is possible that it carries out the mismatch recognition step. This protein has a weak ATPase activity. This is DNA mismatch repair protein MutS from Rickettsia akari (strain Hartford).